The following is a 396-amino-acid chain: Elongation factor Tu 2 (396 aa).

The tr-type G domain occupies 10–206; sequence KPHVNVGTIG…TLDTYIPEPE (197 aa). Residues 19 to 26 form a G1 region; it reads GHVDHGKT. 19–26 contacts GTP; sequence GHVDHGKT. T26 contacts Mg(2+). The segment at 60–64 is G2; it reads GITIN. A G3 region spans residues 81–84; the sequence is DCPG. GTP-binding positions include 81 to 85 and 136 to 139; these read DCPGH and NKCD. A G4 region spans residues 136–139; that stretch reads NKCD. The tract at residues 174 to 176 is G5; sequence SAL.

Belongs to the TRAFAC class translation factor GTPase superfamily. Classic translation factor GTPase family. EF-Tu/EF-1A subfamily. Monomer.

The protein resides in the cytoplasm. The enzyme catalyses GTP + H2O = GDP + phosphate + H(+). Its function is as follows. GTP hydrolase that promotes the GTP-dependent binding of aminoacyl-tRNA to the A-site of ribosomes during protein biosynthesis. This chain is Elongation factor Tu 2, found in Psychrobacter sp. (strain PRwf-1).